Consider the following 82-residue polypeptide: Small ribosomal subunit protein uS17 (82 aa).

The protein belongs to the universal ribosomal protein uS17 family. As to quaternary structure, part of the 30S ribosomal subunit.

One of the primary rRNA binding proteins, it binds specifically to the 5'-end of 16S ribosomal RNA. The chain is Small ribosomal subunit protein uS17 from Sulfurimonas denitrificans (strain ATCC 33889 / DSM 1251) (Thiomicrospira denitrificans (strain ATCC 33889 / DSM 1251)).